Reading from the N-terminus, the 161-residue chain is ATP synthase subunit b 1 (161 aa).

A helical membrane pass occupies residues 6–26 (EFYVALGFVIFVAILLYYGVH).

The protein belongs to the ATPase B chain family. F-type ATPases have 2 components, F(1) - the catalytic core - and F(0) - the membrane proton channel. F(1) has five subunits: alpha(3), beta(3), gamma(1), delta(1), epsilon(1). F(0) has three main subunits: a(1), b(2) and c(10-14). The alpha and beta chains form an alternating ring which encloses part of the gamma chain. F(1) is attached to F(0) by a central stalk formed by the gamma and epsilon chains, while a peripheral stalk is formed by the delta and b chains.

The protein localises to the cell inner membrane. F(1)F(0) ATP synthase produces ATP from ADP in the presence of a proton or sodium gradient. F-type ATPases consist of two structural domains, F(1) containing the extramembraneous catalytic core and F(0) containing the membrane proton channel, linked together by a central stalk and a peripheral stalk. During catalysis, ATP synthesis in the catalytic domain of F(1) is coupled via a rotary mechanism of the central stalk subunits to proton translocation. Its function is as follows. Component of the F(0) channel, it forms part of the peripheral stalk, linking F(1) to F(0). In Beijerinckia indica subsp. indica (strain ATCC 9039 / DSM 1715 / NCIMB 8712), this protein is ATP synthase subunit b 1.